We begin with the raw amino-acid sequence, 38 residues long: Potassium channel toxin alpha-KTx 3.8 (38 aa).

Disulfide bonds link cysteine 8–cysteine 28, cysteine 14–cysteine 33, and cysteine 18–cysteine 35. The interval 26-33 (GKCMNGKC) is interaction with Ca(2+)-activated K(+) channels.

As to expression, expressed by the venom gland.

The protein localises to the secreted. Its function is as follows. Potassium channel inhibitor. The protein is Potassium channel toxin alpha-KTx 3.8 of Hottentotta tamulus sindicus (Scorpion).